Reading from the N-terminus, the 155-residue chain is Endoribonuclease YbeY (155 aa).

Positions 114, 118, and 124 each coordinate Zn(2+).

It belongs to the endoribonuclease YbeY family. The cofactor is Zn(2+).

It is found in the cytoplasm. Functionally, single strand-specific metallo-endoribonuclease involved in late-stage 70S ribosome quality control and in maturation of the 3' terminus of the 16S rRNA. The polypeptide is Endoribonuclease YbeY (Erwinia tasmaniensis (strain DSM 17950 / CFBP 7177 / CIP 109463 / NCPPB 4357 / Et1/99)).